Reading from the N-terminus, the 293-residue chain is MPWIQLKLNTTGTNAEELSDALVETGAVSVTFQDTHDTPVFEPLPGETRLWGDTDVIGLFDAETDMKEVVAILEHHPLLGAGFAHKIEQLEDKDWEREWMDNFHPMRFGERLWICPSWRDVPDENAVNVMLDPGLAFGTGTHPTTSLCLQWLDGLDLNGKTVIDFGCGSGILAIAALKLGAAKAIGIDIDPQAIQASRDNAERNGVSERLELYLPKDQPEAMKADVVVANILAGPLRELAPLISVLPVESGLLGLSGILASQAESVCEAYTELFTLDPVVEKEEWCRITGRKK.

Residues Thr145, Gly166, Asp188, and Asn230 each contribute to the S-adenosyl-L-methionine site.

The protein belongs to the methyltransferase superfamily. PrmA family.

The protein localises to the cytoplasm. It carries out the reaction L-lysyl-[protein] + 3 S-adenosyl-L-methionine = N(6),N(6),N(6)-trimethyl-L-lysyl-[protein] + 3 S-adenosyl-L-homocysteine + 3 H(+). Functionally, methylates ribosomal protein L11. This Citrobacter koseri (strain ATCC BAA-895 / CDC 4225-83 / SGSC4696) protein is Ribosomal protein L11 methyltransferase.